We begin with the raw amino-acid sequence, 378 residues long: Cobalt-precorrin-5B C(1)-methyltransferase (378 aa).

The protein belongs to the CbiD family.

The enzyme catalyses Co-precorrin-5B + S-adenosyl-L-methionine = Co-precorrin-6A + S-adenosyl-L-homocysteine. It functions in the pathway cofactor biosynthesis; adenosylcobalamin biosynthesis; cob(II)yrinate a,c-diamide from sirohydrochlorin (anaerobic route): step 6/10. Its function is as follows. Catalyzes the methylation of C-1 in cobalt-precorrin-5B to form cobalt-precorrin-6A. The chain is Cobalt-precorrin-5B C(1)-methyltransferase from Thermoplasma volcanium (strain ATCC 51530 / DSM 4299 / JCM 9571 / NBRC 15438 / GSS1).